Reading from the N-terminus, the 24-residue chain is Glutamate dehydrogenase (24 aa).

Belongs to the Glu/Leu/Phe/Val dehydrogenases family. In terms of assembly, homohexamer.

Its subcellular location is the cytoplasm. It catalyses the reaction L-glutamate + NAD(+) + H2O = 2-oxoglutarate + NH4(+) + NADH + H(+). It carries out the reaction L-glutamate + NADP(+) + H2O = 2-oxoglutarate + NH4(+) + NADPH + H(+). In Pyrococcus woesei, this protein is Glutamate dehydrogenase (gdhA).